A 469-amino-acid chain; its full sequence is 3-isopropylmalate dehydratase large subunit (469 aa).

[4Fe-4S] cluster contacts are provided by C347, C408, and C411.

The protein belongs to the aconitase/IPM isomerase family. LeuC type 1 subfamily. In terms of assembly, heterodimer of LeuC and LeuD. [4Fe-4S] cluster serves as cofactor.

The catalysed reaction is (2R,3S)-3-isopropylmalate = (2S)-2-isopropylmalate. It participates in amino-acid biosynthesis; L-leucine biosynthesis; L-leucine from 3-methyl-2-oxobutanoate: step 2/4. Catalyzes the isomerization between 2-isopropylmalate and 3-isopropylmalate, via the formation of 2-isopropylmaleate. This chain is 3-isopropylmalate dehydratase large subunit, found in Haemophilus influenzae (strain ATCC 51907 / DSM 11121 / KW20 / Rd).